Consider the following 156-residue polypeptide: Ribosomal RNA large subunit methyltransferase H (156 aa).

Residues leucine 73, glycine 104, and 123–128 (LSALTL) contribute to the S-adenosyl-L-methionine site.

Belongs to the RNA methyltransferase RlmH family. Homodimer.

It localises to the cytoplasm. The enzyme catalyses pseudouridine(1915) in 23S rRNA + S-adenosyl-L-methionine = N(3)-methylpseudouridine(1915) in 23S rRNA + S-adenosyl-L-homocysteine + H(+). Specifically methylates the pseudouridine at position 1915 (m3Psi1915) in 23S rRNA. The sequence is that of Ribosomal RNA large subunit methyltransferase H from Shewanella frigidimarina (strain NCIMB 400).